The following is a 61-amino-acid chain: Photosystem II reaction center protein K (61 aa).

A propeptide spanning residues 1–24 is cleaved from the precursor; sequence MLNILNLICICLNFALYSSSFFFT. The helical transmembrane segment at 40–60 threads the bilayer; that stretch reads MPVIPLFFFLLAFVWQAAVSF.

This sequence belongs to the PsbK family. PSII is composed of 1 copy each of membrane proteins PsbA, PsbB, PsbC, PsbD, PsbE, PsbF, PsbH, PsbI, PsbJ, PsbK, PsbL, PsbM, PsbT, PsbX, PsbY, PsbZ, Psb30/Ycf12, at least 3 peripheral proteins of the oxygen-evolving complex and a large number of cofactors. It forms dimeric complexes.

Its subcellular location is the plastid. The protein resides in the chloroplast thylakoid membrane. Functionally, one of the components of the core complex of photosystem II (PSII). PSII is a light-driven water:plastoquinone oxidoreductase that uses light energy to abstract electrons from H(2)O, generating O(2) and a proton gradient subsequently used for ATP formation. It consists of a core antenna complex that captures photons, and an electron transfer chain that converts photonic excitation into a charge separation. The polypeptide is Photosystem II reaction center protein K (Populus alba (White poplar)).